A 261-amino-acid chain; its full sequence is Triosephosphate isomerase (261 aa).

10-12 (NWK) provides a ligand contact to substrate. Histidine 100 (electrophile) is an active-site residue. The active-site Proton acceptor is glutamate 172. Substrate is bound by residues glycine 178, serine 218, and 239–240 (GG).

The protein belongs to the triosephosphate isomerase family. Homodimer.

The protein localises to the cytoplasm. The enzyme catalyses D-glyceraldehyde 3-phosphate = dihydroxyacetone phosphate. It participates in carbohydrate biosynthesis; gluconeogenesis. The protein operates within carbohydrate degradation; glycolysis; D-glyceraldehyde 3-phosphate from glycerone phosphate: step 1/1. In terms of biological role, involved in the gluconeogenesis. Catalyzes stereospecifically the conversion of dihydroxyacetone phosphate (DHAP) to D-glyceraldehyde-3-phosphate (G3P). The chain is Triosephosphate isomerase from Mycobacterium leprae (strain TN).